The primary structure comprises 366 residues: Phospho-N-acetylmuramoyl-pentapeptide-transferase (366 aa).

The next 10 helical transmembrane spans lie at 3 to 23, 55 to 75, 80 to 100, 118 to 138, 161 to 181, 197 to 217, 235 to 255, 262 to 282, 287 to 307, and 341 to 361; these read QIFIAGAVAFLAAVLFTPVLI, IAILVGITLGYIVAVLVGLVF, PGVSGWLVLGLTLALGGVGFA, AKLICQLVIAIAFGVMILQFP, IAVGGAVIGMILFLIFINIVI, LASGVTAIVMGAYVLITFWQF, PLDLAMLASAGLGACLGFLWW, IFMGDTGSLALGGLVAGLSIT, LLMIIVGAIFVLETVSVVIQV, and FWLLAALAAMTGFGLFYGEWL.

It belongs to the glycosyltransferase 4 family. MraY subfamily. Mg(2+) serves as cofactor.

The protein localises to the cell membrane. The catalysed reaction is UDP-N-acetyl-alpha-D-muramoyl-L-alanyl-gamma-D-glutamyl-meso-2,6-diaminopimeloyl-D-alanyl-D-alanine + di-trans,octa-cis-undecaprenyl phosphate = di-trans,octa-cis-undecaprenyl diphospho-N-acetyl-alpha-D-muramoyl-L-alanyl-D-glutamyl-meso-2,6-diaminopimeloyl-D-alanyl-D-alanine + UMP. It functions in the pathway cell wall biogenesis; peptidoglycan biosynthesis. Its function is as follows. Catalyzes the initial step of the lipid cycle reactions in the biosynthesis of the cell wall peptidoglycan: transfers peptidoglycan precursor phospho-MurNAc-pentapeptide from UDP-MurNAc-pentapeptide onto the lipid carrier undecaprenyl phosphate, yielding undecaprenyl-pyrophosphoryl-MurNAc-pentapeptide, known as lipid I. The chain is Phospho-N-acetylmuramoyl-pentapeptide-transferase from Corynebacterium urealyticum (strain ATCC 43042 / DSM 7109).